Reading from the N-terminus, the 1081-residue chain is uncharacterized protein (1081 aa).

Coiled-coil stretches lie at residues 18–131 (AIEE…FEEN) and 173–242 (NHDE…NDDK). Residues 22-53 (NNKNREIQEKRQKETKDRNDRMVQNQKDRKEM) are compositionally biased toward basic and acidic residues. Residues 22–60 (NNKNREIQEKRQKETKDRNDRMVQNQKDRKEMIGLTNEK) are disordered. Disordered stretches follow at residues 250 to 321 (TDDE…KPGI) and 388 to 1081 (QEPK…GNDE). A compositionally biased stretch (pro residues) spans 267-283 (TPTPTPTPTPTPTPTPT). Low complexity-rich tracts occupy residues 284 to 313 (PTTT…KTST) and 396 to 410 (NNQS…QAGD). Residues 411-421 (DQNKNQNRDEN) are compositionally biased toward basic and acidic residues. Composition is skewed to low complexity over residues 422-568 (NQGG…NNQE), 576-602 (NQDG…GGEN), 614-623 (GENNQDGGEN), 633-644 (DGENNQDGGENN), 662-672 (GENNQDGGENN), and 680-733 (QDGG…NNQD). Composition is skewed to acidic residues over residues 748-768 (GGED…DNQD), 778-832 (NNQD…DENN), and 840-854 (QDGD…DENN). Composition is skewed to low complexity over residues 855–869 (NQDG…GENN) and 877–888 (NQDGGENNQDGE). The span at 889-954 (NNQDGDENNN…GDENNQDGDE (66 aa)) shows a compositional bias: acidic residues. 3 stretches are compositionally biased toward low complexity: residues 955-975 (NNQG…GGDE), 983-1026 (ENNQ…GGDE), and 1034-1081 (GENN…GNDE).

This is an uncharacterized protein from Dictyostelium discoideum (Social amoeba).